Reading from the N-terminus, the 234-residue chain is MHERSKPKTTGADQTCLEEEKETRGGLRNGSSSDTGGRERTDRGVSCSRRKNCEGQNLEPIGERDDQSSDDDPLLCDERSTIGRHGNADERPHQELAEGGIRMPGRGWWRGKMGNGVWYDFTRHGRGEDDAEGAENNATQQDADVCSGCKFESPREFRKGHRRCSSSTSGILLDREDGASGVPEVSFKERMEAEKKKLKELDDKIYKLRRRLRKMEYKKMGINREIDKLEDSVQ.

Residues 1-103 form a disordered region; sequence MHERSKPKTT…QELAEGGIRM (103 aa). Over residues 76–96 the composition is skewed to basic and acidic residues; that stretch reads CDERSTIGRHGNADERPHQEL. A coiled-coil region spans residues 183-234; the sequence is PEVSFKERMEAEKKKLKELDDKIYKLRRRLRKMEYKKMGINREIDKLEDSVQ.

In terms of assembly, interacts with host HSC70.

The protein localises to the virion. The protein resides in the host cytoplasm. Its subcellular location is the host nucleus. In terms of biological role, may play a role in virus replication, from virus entry and uncoating to assembly and budding of the virus particle. Interaction of viral NEP with M1-Hsc70 is thought to promote nuclear export of the viral encapsidated genomes. The sequence is that of Matrix protein 1 from Infectious salmon anemia virus (isolate Atlantic salmon/Norway/810/9/99) (ISAV).